The following is a 147-amino-acid chain: Monothiol glutaredoxin-S5 (147 aa).

Residues 49–146 enclose the Glutaredoxin domain; it reads AAEVRRAVAE…PILKKAGALW (98 aa). Cysteine 69 serves as a coordination point for [2Fe-2S] cluster. Positions 144–147 match the Responsive for interaction with TGA factors motif; that stretch reads ALWL.

It belongs to the glutaredoxin family. CC-type subfamily.

It localises to the cytoplasm. The protein resides in the nucleus. Functionally, may only reduce GSH-thiol disulfides, but not protein disulfides. This chain is Monothiol glutaredoxin-S5 (GRXS5), found in Oryza sativa subsp. japonica (Rice).